A 77-amino-acid polypeptide reads, in one-letter code: Putative ankyrin repeat protein RC0956 (77 aa).

Residues 8 to 38 (TDISPLMLASEYGQVTIVKYLLKHGNYNVKG) form an ANK repeat.

The protein is Putative ankyrin repeat protein RC0956 of Rickettsia conorii (strain ATCC VR-613 / Malish 7).